A 419-amino-acid polypeptide reads, in one-letter code: Tyrosine--tRNA ligase (419 aa).

Tyr-42 is an L-tyrosine binding site. Positions 47 to 56 (ATAPSLHVGS) match the 'HIGH' region motif. L-tyrosine-binding residues include Tyr-179 and Gln-183. The 'KMSKS' region motif lies at 239-243 (KMGKT). An ATP-binding site is contributed by Lys-242. An S4 RNA-binding domain is found at 353-418 (VVLAALFADA…GKKKIVLVKP (66 aa)).

The protein belongs to the class-I aminoacyl-tRNA synthetase family. TyrS type 1 subfamily. As to quaternary structure, homodimer.

The protein localises to the cytoplasm. The enzyme catalyses tRNA(Tyr) + L-tyrosine + ATP = L-tyrosyl-tRNA(Tyr) + AMP + diphosphate + H(+). Functionally, catalyzes the attachment of tyrosine to tRNA(Tyr) in a two-step reaction: tyrosine is first activated by ATP to form Tyr-AMP and then transferred to the acceptor end of tRNA(Tyr). This is Tyrosine--tRNA ligase from Caulobacter vibrioides (strain ATCC 19089 / CIP 103742 / CB 15) (Caulobacter crescentus).